Here is a 152-residue protein sequence, read N- to C-terminus: SsrA-binding protein (152 aa).

The protein belongs to the SmpB family.

It localises to the cytoplasm. Its function is as follows. Required for rescue of stalled ribosomes mediated by trans-translation. Binds to transfer-messenger RNA (tmRNA), required for stable association of tmRNA with ribosomes. tmRNA and SmpB together mimic tRNA shape, replacing the anticodon stem-loop with SmpB. tmRNA is encoded by the ssrA gene; the 2 termini fold to resemble tRNA(Ala) and it encodes a 'tag peptide', a short internal open reading frame. During trans-translation Ala-aminoacylated tmRNA acts like a tRNA, entering the A-site of stalled ribosomes, displacing the stalled mRNA. The ribosome then switches to translate the ORF on the tmRNA; the nascent peptide is terminated with the 'tag peptide' encoded by the tmRNA and targeted for degradation. The ribosome is freed to recommence translation, which seems to be the essential function of trans-translation. This chain is SsrA-binding protein, found in Helicobacter pylori (strain Shi470).